The primary structure comprises 121 residues: Small ribosomal subunit protein uS13 (121 aa).

Residues 94–121 (DLPVRGQRTKTNARTRKGPRKSGVQLKK) form a disordered region. A compositionally biased stretch (basic residues) spans 100 to 121 (QRTKTNARTRKGPRKSGVQLKK).

Belongs to the universal ribosomal protein uS13 family. As to quaternary structure, part of the 30S ribosomal subunit. Forms a loose heterodimer with protein S19. Forms two bridges to the 50S subunit in the 70S ribosome.

Located at the top of the head of the 30S subunit, it contacts several helices of the 16S rRNA. In the 70S ribosome it contacts the 23S rRNA (bridge B1a) and protein L5 of the 50S subunit (bridge B1b), connecting the 2 subunits; these bridges are implicated in subunit movement. Contacts the tRNAs in the A and P-sites. The polypeptide is Small ribosomal subunit protein uS13 (Polynucleobacter necessarius subsp. necessarius (strain STIR1)).